The primary structure comprises 70 residues: U2-agatoxin-Ao1m (70 aa).

The N-terminal stretch at 1 to 20 is a signal peptide; that stretch reads MRAIISLFLISAMVFSMIQA. The propeptide occupies 21-34; it reads VPEEXGLQLSEDER. 3 disulfide bridges follow: cysteine 37-cysteine 53, cysteine 44-cysteine 58, and cysteine 52-cysteine 68. The residue at position 69 (leucine 69) is a Leucine amide.

It belongs to the neurotoxin 01 (U2-agtx) family. Expressed by the venom gland.

The protein resides in the secreted. Its function is as follows. Insect active toxin causing rapid but reversible paralysis in crickets. No activity shown in mammals. Does not show effect on mammalian voltage-gated calcium channels. The protein is U2-agatoxin-Ao1m of Agelena orientalis (Funnel-web spider).